We begin with the raw amino-acid sequence, 272 residues long: Indole-3-glycerol phosphate synthase (272 aa).

It belongs to the TrpC family.

It catalyses the reaction 1-(2-carboxyphenylamino)-1-deoxy-D-ribulose 5-phosphate + H(+) = (1S,2R)-1-C-(indol-3-yl)glycerol 3-phosphate + CO2 + H2O. The protein operates within amino-acid biosynthesis; L-tryptophan biosynthesis; L-tryptophan from chorismate: step 4/5. This is Indole-3-glycerol phosphate synthase from Mycobacteroides abscessus (strain ATCC 19977 / DSM 44196 / CCUG 20993 / CIP 104536 / JCM 13569 / NCTC 13031 / TMC 1543 / L948) (Mycobacterium abscessus).